The chain runs to 675 residues: MADKEAGGSDGPRETAPTSAYSSPARSLGDTGITPLSPSHIVNDTDSNVSEQQSFLVVVAVDFGTTSSGYAYSFTKEPECIHVMRRWEGGDPGVSNQKTPTTILLTPERKFHSFGYAARDFYHDLDPNEAKQWLYLEKFKMKLHTTGDLTMDTDLTAANGKKVKALEIFAYALQYFKEQALKELSDQAGSEFENSDVRWVITVPAIWKQPAKQFMRQAAYQAGLASPENSEQLIIALEPEAASIYCRKLRLHQMIELSSKAAVNGYSGSDTVGAGFTQAKEHIRRNRQSRTFLVENVIGEIWSELEEGDKYVVVDSGGGTVDLTVHQIRLPEGHLKELYKATGGPYGSLGVDYEFEKLLYKIFGEDFIEQFKIKRPAAWVDLMIAFESRKRAAAPDRTNPLNITLPFSFIDYYKKFRGHSVEHALRKSNVDFVKWSSQGMLRMSPDAMNALFKPTIDSIIEHLRDLFQKPEVSTVKFLFLVGGFAEAPLLQQAVQAAFGDQCRIIIPQDVGLTILKGAVLFGLDPAVIKVRRSPLTYGVGVLNRYVEGKHPPEKLLVKDGTRWCTDVFDKFISADQSVALGELVKRSYTPAKPSQLVIVINIYSSEHDNVSFITDPGVKKCGTLRLDLTGTSGTAVPARREIQTLMQFGDTEIKATAIDIATSKSVKVGIDFLNY.

The span at 1 to 13 shows a compositional bias: basic and acidic residues; the sequence is MADKEAGGSDGPR. Residues 1–45 are disordered; the sequence is MADKEAGGSDGPRETAPTSAYSSPARSLGDTGITPLSPSHIVNDT. Residue Ala2 is modified to N-acetylalanine. Composition is skewed to polar residues over residues 16–25 and 34–45; these read APTSAYSSPA and TPLSPSHIVNDT.

It belongs to the heat shock protein 70 family. In terms of assembly, interacts with SORL1 (via cytosolic C-terminus); this interaction affects SORL1 internalization and subcellular localization. As to expression, widely expressed with highest levels in brain, kidney and muscle.

Its subcellular location is the cytoplasm. It localises to the nucleus. Its function is as follows. Adapter protein for SORL1, but not SORT1. Delays SORL1 internalization and affects SORL1 subcellular localization. The protein is Heat shock 70 kDa protein 12A (HSPA12A) of Homo sapiens (Human).